The primary structure comprises 345 residues: Protein-arginine kinase (345 aa).

Positions 15 to 245 constitute a Phosphagen kinase C-terminal domain; the sequence is LVISSRIRLA…LQIINQEIIS (231 aa). ATP-binding positions include 18–22, histidine 82, arginine 116, 167–171, and 198–203; these read SSRIR, RASVM, and RGLYGE. The short motif at 328–333 is the RDXXRA motif of the pArg binding pocket involved in allosteric regulation element; it reads RDFNRA.

It belongs to the ATP:guanido phosphotransferase family.

It catalyses the reaction L-arginyl-[protein] + ATP = N(omega)-phospho-L-arginyl-[protein] + ADP + H(+). Appears to be allosterically activated by the binding of pArg-containing polypeptides to the pArg-binding pocket localized in the C-terminal domain of McsB. In terms of biological role, catalyzes the specific phosphorylation of arginine residues in proteins. The protein is Protein-arginine kinase of Clostridium kluyveri (strain NBRC 12016).